The following is a 329-amino-acid chain: Sex comb on midleg-like protein 1 (329 aa).

Phosphoserine is present on residues Ser-138 and Ser-238. The interval Ser-138–Pro-157 is disordered. The region spanning Trp-258–Lys-325 is the SAM domain.

Belongs to the SCM family.

The protein localises to the nucleus. Putative Polycomb group (PcG) protein. PcG proteins act by forming multiprotein complexes, which are required to maintain the transcriptionally repressive state of homeotic genes throughout development. May be involved in spermatogenesis during sexual maturation. This Gorilla gorilla gorilla (Western lowland gorilla) protein is Sex comb on midleg-like protein 1 (SCML1).